The sequence spans 180 residues: MSTSIHATTIFAVQHNGHAAMAGDGQVTLGEQVIMKQTARKVRRLYNDKVLAGFAGSVADAFTLFEKFETKLQQFSGNLERAAVELAQEWRGDKQLRQLEAMLIVMDETSILVVSGTGEVIVPDDNLIAIGSGGNYALSAGRALKRNATHLSASEMAYESLKVASDICVFTNDRIIVENL.

The active site involves T8. Residues S165, C168, and T171 each coordinate Na(+).

This sequence belongs to the peptidase T1B family. HslV subfamily. In terms of assembly, a double ring-shaped homohexamer of HslV is capped on each side by a ring-shaped HslU homohexamer. The assembly of the HslU/HslV complex is dependent on binding of ATP.

The protein localises to the cytoplasm. The enzyme catalyses ATP-dependent cleavage of peptide bonds with broad specificity.. With respect to regulation, allosterically activated by HslU binding. Its function is as follows. Protease subunit of a proteasome-like degradation complex believed to be a general protein degrading machinery. The chain is ATP-dependent protease subunit HslV from Staphylococcus saprophyticus subsp. saprophyticus (strain ATCC 15305 / DSM 20229 / NCIMB 8711 / NCTC 7292 / S-41).